The chain runs to 912 residues: Phosphoenolpyruvate carboxylase (912 aa).

Residues histidine 138 and lysine 575 contribute to the active site.

Belongs to the PEPCase type 1 family. Mg(2+) serves as cofactor.

It catalyses the reaction oxaloacetate + phosphate = phosphoenolpyruvate + hydrogencarbonate. Its function is as follows. Forms oxaloacetate, a four-carbon dicarboxylic acid source for the tricarboxylic acid cycle. In Lactobacillus helveticus (strain DPC 4571), this protein is Phosphoenolpyruvate carboxylase.